The following is an 862-amino-acid chain: uncharacterized protein (862 aa).

Disordered regions lie at residues 45-91 (HPPV…PDEV), 633-824 (RAEQ…GDDD), and 837-862 (GGSG…LLLS). Acidic residues-rich tracts occupy residues 57–69 (MDVD…EKDE) and 78–91 (PEVE…PDEV). 3 stretches are compositionally biased toward basic and acidic residues: residues 633 to 650 (RAEQ…DAAK), 657 to 686 (REAE…KAEK), and 694 to 703 (TKKEKTEKKT). The span at 751–760 (EKKKRTAAKK) shows a compositional bias: basic residues. Basic and acidic residues predominate over residues 761 to 779 (KTVDRPSGHRPSSKKEYRS).

This is an uncharacterized protein from Ictaluridae (bullhead catfishes).